The primary structure comprises 543 residues: Germacrene A synthase (543 aa).

Residues Asp-296, Asp-300, Asp-439, and Glu-447 each contribute to the Mg(2+) site. The DDXXD motif motif lies at 296–300 (DDTYD).

This sequence belongs to the terpene synthase family. Tpsa subfamily. Mg(2+) is required as a cofactor. Requires Mn(2+) as cofactor. In terms of tissue distribution, barely detectable in leaves.

Its subcellular location is the plastid. The protein localises to the chloroplast. The catalysed reaction is (2E,6E)-farnesyl diphosphate = germacrene A + diphosphate. It catalyses the reaction (2E,6E)-farnesyl diphosphate = (1S,2S,4R)-beta-elemene + diphosphate. The protein operates within secondary metabolite biosynthesis; terpenoid biosynthesis. Sesquiterpene synthase involved in the biosynthesis of volatile compounds widely used in aromatherapy and folk medicine, and present in culinary herbs. Mediates the conversion of (2E,6E)-farnesyl diphosphate (FPP) into germacrene A and beta-elemene. Not able to use (2E)-geranyl diphosphate (GPP) as substrate. This chain is Germacrene A synthase, found in Lavandula viridis (Green lavender).